A 269-amino-acid chain; its full sequence is GTP cyclohydrolase FolE2 2 (269 aa).

The protein belongs to the GTP cyclohydrolase IV family.

The enzyme catalyses GTP + H2O = 7,8-dihydroneopterin 3'-triphosphate + formate + H(+). It participates in cofactor biosynthesis; 7,8-dihydroneopterin triphosphate biosynthesis; 7,8-dihydroneopterin triphosphate from GTP: step 1/1. Its function is as follows. Converts GTP to 7,8-dihydroneopterin triphosphate. In Burkholderia lata (strain ATCC 17760 / DSM 23089 / LMG 22485 / NCIMB 9086 / R18194 / 383), this protein is GTP cyclohydrolase FolE2 2.